Consider the following 978-residue polypeptide: Probable serine/threonine-protein kinase PLK (978 aa).

Over residues 19-36 the composition is skewed to low complexity; sequence IQIQQQQFKQPQQQPQQK. Disordered regions lie at residues 19–66 and 121–143; these read IQIQ…SSIH and QQQQQQQQMPPPQSLPNKSNEPQ. A compositionally biased stretch (polar residues) spans 37-53; the sequence is SNSCFSDQENYPANIQP. Over residues 54–64 the composition is skewed to low complexity; that stretch reads SSSTSSSSSSS. Positions 163–416 constitute a Protein kinase domain; the sequence is YRQGEFLGKG…LTQILEHDFF (254 aa). ATP is bound by residues 169–177 and K192; that span reads LGKGGFAKC. The active-site Proton acceptor is D286. 2 disordered regions span residues 463–554 and 601–638; these read GTTS…FANL and ENQQQQQQQQQQQQQQQQQQQRVNNNINNNGNTVTVTT. Composition is skewed to low complexity over residues 473–492 and 500–549; these read HHYQQYQQQPQQQYNNNYQQ and INNM…NINN. Coiled coils occupy residues 497–555 and 592–630; these read KKQI…ANLS and IKQQYTNMNENQQQQQQQQQQQQQQQQQQQRVNNNINNN. In terms of domain architecture, POLO box 1 spans 696-780; that stretch reads YISQYADFTN…IKYFLNHFTN (85 aa). Residues 798–819 form a disordered region; that stretch reads NNNNNNNVENVTNNNNNNSNNS. The region spanning 826 to 904 is the POLO box 2 domain; that stretch reads YVKKWIKFDN…IYGTLSNNLY (79 aa). Positions 908–978 are disordered; sequence PESSFQQLPQ…SIPQPQLINQ (71 aa). Residues 913-978 are compositionally biased toward low complexity; it reads QQLPQQQYQQ…SIPQPQLINQ (66 aa).

It belongs to the protein kinase superfamily. Ser/Thr protein kinase family. CDC5/Polo subfamily.

It catalyses the reaction L-seryl-[protein] + ATP = O-phospho-L-seryl-[protein] + ADP + H(+). The catalysed reaction is L-threonyl-[protein] + ATP = O-phospho-L-threonyl-[protein] + ADP + H(+). The chain is Probable serine/threonine-protein kinase PLK (PLK) from Dictyostelium discoideum (Social amoeba).